Here is a 553-residue protein sequence, read N- to C-terminus: Phosphoglucomutase (553 aa).

Residues 1–25 form a disordered region; sequence MQATIKRYPTSPISGQTLGTSGLRK. The span at 11 to 20 shows a compositional bias: polar residues; it reads SPISGQTLGT. Substrate is bound by residues threonine 20, arginine 24, 117 to 118, and lysine 131; that span reads SH. Serine 117 (phosphoserine intermediate) is an active-site residue. Serine 117 contacts Mg(2+). 3 residues coordinate Mg(2+): aspartate 289, aspartate 291, and aspartate 293. Substrate is bound by residues 293 to 294, threonine 352, 371 to 373, lysine 384, and arginine 509; these read DR and EES.

The protein belongs to the phosphohexose mutase family. Mg(2+) is required as a cofactor.

The protein resides in the cytoplasm. It catalyses the reaction alpha-D-glucose 1-phosphate = alpha-D-glucose 6-phosphate. Functionally, catalyzes the reversible conversion of glucose 1-phosphate into glucose 6-phosphate. This enzyme participates in both the breakdown and synthesis of glucose. This chain is Phosphoglucomutase, found in Entamoeba histolytica (strain ATCC 30459 / HM-1:IMSS / ABRM).